We begin with the raw amino-acid sequence, 357 residues long: GDP-mannose transporter 2 (357 aa).

At 1–43 (MASTRNGISKDELLPTYELQSQRDVENSGSVTSFASKISNNAA) the chain is on the cytoplasmic side. Residues 44 to 64 (AAVLAYCLSSISMTLVNKYVV) traverse the membrane as a helical segment. Residues 65–68 (SGAS) are Lumenal-facing. Residues 69–89 (WNLSFLYLAIQSFIGTVAIMV) form a helical membrane-spanning segment. Over 90-107 (CKKAGLIQNLGLFDLKKA) the chain is Cytoplasmic. The helical transmembrane segment at 108 to 128 (QTWLPISLLLVGMIYTGNKAL) threads the bilayer. Position 129 (Gln129) is a topological domain, lumenal. The helical transmembrane segment at 130–150 (FLSVPVYTIFKNLTIIVIAYG) threads the bilayer. Residues 151–161 (EVFMVGGSVKP) are Cytoplasmic-facing. A helical membrane pass occupies residues 162-182 (LALLSFGLMVLSSVVAAWADI). The Lumenal portion of the chain corresponds to 183-196 (QIATAATAKASSDS). Residues 197–217 (AVATLSALNAGYAWMGTNVVF) traverse the membrane as a helical segment. Residues 218–238 (SASYALGMRRVIKKTNFDNWD) are Cytoplasmic-facing. The chain crosses the membrane as a helical span at residues 239–259 (VMFYNNLLSVPILLLSSLLVE). Residues 260 to 277 (DWSSENLQRNFPAESRQS) are Lumenal-facing. A helical membrane pass occupies residues 278–298 (LVIGIFYSGVAAIFISYCTAW). Topologically, residues 299–306 (CVRATSST) are cytoplasmic. The chain crosses the membrane as a helical span at residues 307–327 (TYAMVGALNKLPLAVAGIVFF). Residues 328-332 (AAPVT) are Lumenal-facing. The helical transmembrane segment at 333-352 (FGSVSAIVLGFISGLVYTWA) threads the bilayer. Residues 353–357 (KSTGA) lie on the Cytoplasmic side of the membrane.

The protein belongs to the TPT transporter family. SLC35D subfamily. Homooligomer.

It is found in the golgi apparatus membrane. Its subcellular location is the cytoplasmic vesicle membrane. The protein resides in the endoplasmic reticulum membrane. In terms of biological role, involved in the import of GDP-mannose from the cytoplasm into the Golgi lumen. The protein is GDP-mannose transporter 2 (gmt2) of Emericella nidulans (strain FGSC A4 / ATCC 38163 / CBS 112.46 / NRRL 194 / M139) (Aspergillus nidulans).